The sequence spans 168 residues: Large ribosomal subunit protein uL10 (168 aa).

The protein belongs to the universal ribosomal protein uL10 family. In terms of assembly, part of the ribosomal stalk of the 50S ribosomal subunit. The N-terminus interacts with L11 and the large rRNA to form the base of the stalk. The C-terminus forms an elongated spine to which L12 dimers bind in a sequential fashion forming a multimeric L10(L12)X complex.

Its function is as follows. Forms part of the ribosomal stalk, playing a central role in the interaction of the ribosome with GTP-bound translation factors. The polypeptide is Large ribosomal subunit protein uL10 (Ralstonia pickettii (strain 12J)).